The following is a 300-amino-acid chain: MNPHYARLVTLAAVSATAVALVLFIMKVFAWWHTGSVSLLASLVDSLVDIAASLVNLLVVRYSLQPADTEHAFGHGKAESLAALAQSMFISGSALFLILTGLQHSLEPQTLHAPEVGMWVTLIALVATLLLVSFQRWVVKRTHSQAVRADMLHYQSDLLMNGAILVALALSWKGITRADSLFALGIGGYILYSALRMGYDAVQSLLDRALPDDEHRAIAEVIVNWPGIRGAHALRTRRSGPTRFIQLHLEMDDALPLVQAHQIADDLEQALLKRFPGADIIIHQDPVSAVPENQRGRLTA.

4 helical membrane passes run 11–31 (LAAVSATAVALVLFIMKVFAW), 40–60 (LASLVDSLVDIAASLVNLLVV), 81–101 (LAALAQSMFISGSALFLILTG), and 114–134 (PEVGMWVTLIALVATLLLVSF). Residues D45 and D49 each coordinate Zn(2+). Zn(2+) contacts are provided by H153 and D157. A run of 2 helical transmembrane segments spans residues 156–176 (SDLLMNGAILVALALSWKGIT) and 182–202 (FALGIGGYILYSALRMGYDAV).

The protein belongs to the cation diffusion facilitator (CDF) transporter (TC 2.A.4) family. FieF subfamily. As to quaternary structure, homodimer.

It is found in the cell inner membrane. It carries out the reaction Zn(2+)(in) + H(+)(out) = Zn(2+)(out) + H(+)(in). The catalysed reaction is Cd(2+)(in) + H(+)(out) = Cd(2+)(out) + H(+)(in). It catalyses the reaction Fe(2+)(in) + H(+)(out) = Fe(2+)(out) + H(+)(in). Divalent metal cation transporter which exports Zn(2+), Cd(2+) and possibly Fe(2+). May be involved in zinc and iron detoxification by efflux. This is Cation-efflux pump FieF from Pectobacterium carotovorum subsp. carotovorum (strain PC1).